Reading from the N-terminus, the 168-residue chain is Ribosome maturation factor RimM (168 aa).

The region spanning 92 to 166 is the PRC barrel domain; it reads EDTFYKADLI…RITVDPIEGM (75 aa).

It belongs to the RimM family. As to quaternary structure, binds ribosomal protein uS19.

Its subcellular location is the cytoplasm. Its function is as follows. An accessory protein needed during the final step in the assembly of 30S ribosomal subunit, possibly for assembly of the head region. Essential for efficient processing of 16S rRNA. May be needed both before and after RbfA during the maturation of 16S rRNA. It has affinity for free ribosomal 30S subunits but not for 70S ribosomes. The sequence is that of Ribosome maturation factor RimM from Alkaliphilus metalliredigens (strain QYMF).